A 153-amino-acid polypeptide reads, in one-letter code: uncharacterized protein (153 aa).

Residues 1–22 (MKMLKKGTAVLFVMIMAVMLVA) form the signal peptide. Cys23 is lipidated: N-palmitoyl cysteine. Cys23 carries the S-diacylglycerol cysteine lipid modification. The disordered stretch occupies residues 117-153 (DMNKIPGMSSNGDTSKGISMEESAKMLESQGYKEVSK). Polar residues predominate over residues 124–133 (MSSNGDTSKG).

This sequence to E.coli YehR.

The protein localises to the cell membrane. This is an uncharacterized protein from Listeria monocytogenes serovar 1/2a (strain ATCC BAA-679 / EGD-e).